We begin with the raw amino-acid sequence, 136 residues long: Ribonuclease P protein component (136 aa).

It belongs to the RnpA family. As to quaternary structure, consists of a catalytic RNA component (M1 or rnpB) and a protein subunit.

It catalyses the reaction Endonucleolytic cleavage of RNA, removing 5'-extranucleotides from tRNA precursor.. RNaseP catalyzes the removal of the 5'-leader sequence from pre-tRNA to produce the mature 5'-terminus. It can also cleave other RNA substrates such as 4.5S RNA. The protein component plays an auxiliary but essential role in vivo by binding to the 5'-leader sequence and broadening the substrate specificity of the ribozyme. In Burkholderia pseudomallei (strain 1106a), this protein is Ribonuclease P protein component.